Here is a 252-residue protein sequence, read N- to C-terminus: Acetoacetate decarboxylase (252 aa).

Lys-116 serves as the catalytic Schiff-base intermediate with acetoacetate.

This sequence belongs to the ADC family.

The catalysed reaction is acetoacetate + H(+) = acetone + CO2. In terms of biological role, catalyzes the conversion of acetoacetate to acetone and carbon dioxide. The polypeptide is Acetoacetate decarboxylase (Paraburkholderia phytofirmans (strain DSM 17436 / LMG 22146 / PsJN) (Burkholderia phytofirmans)).